The sequence spans 294 residues: Pyridoxal 5'-phosphate synthase subunit PdxS (294 aa).

Asp24 lines the D-ribose 5-phosphate pocket. Lys81 serves as the catalytic Schiff-base intermediate with D-ribose 5-phosphate. Gly153 provides a ligand contact to D-ribose 5-phosphate. Arg165 provides a ligand contact to D-glyceraldehyde 3-phosphate. D-ribose 5-phosphate-binding positions include Gly214 and 235-236; that span reads GS.

It belongs to the PdxS/SNZ family. In terms of assembly, homohexamer and homododecamer. In the presence of PdxT, forms a dodecamer of heterodimers.

The enzyme catalyses aldehydo-D-ribose 5-phosphate + D-glyceraldehyde 3-phosphate + L-glutamine = pyridoxal 5'-phosphate + L-glutamate + phosphate + 3 H2O + H(+). It functions in the pathway cofactor biosynthesis; pyridoxal 5'-phosphate biosynthesis. Functionally, catalyzes the formation of pyridoxal 5'-phosphate from ribose 5-phosphate (RBP), glyceraldehyde 3-phosphate (G3P) and ammonia. The ammonia is provided by the PdxT subunit. Can also use ribulose 5-phosphate and dihydroxyacetone phosphate as substrates, resulting from enzyme-catalyzed isomerization of RBP and G3P, respectively. The protein is Pyridoxal 5'-phosphate synthase subunit PdxS of Bacillus subtilis (strain 168).